The chain runs to 397 residues: Glia-derived nexin (397 aa).

An N-terminal signal peptide occupies residues 1-19 (MNWHFPFFILTTVTLYSVH). An N-linked (GlcNAc...) asparagine glycan is attached at N159.

Belongs to the serpin family. In terms of tissue distribution, most abundant in seminal vesicles.

The protein localises to the secreted. It is found in the extracellular space. Its function is as follows. Serine protease inhibitor with activity toward thrombin, trypsin, and urokinase. Promotes neurite extension by inhibiting thrombin. Binds heparin. This chain is Glia-derived nexin (Serpine2), found in Mus musculus (Mouse).